The sequence spans 319 residues: Acetyl-coenzyme A carboxylase carboxyl transferase subunit alpha (319 aa).

The CoA carboxyltransferase C-terminal domain maps to 35-296; that stretch reads NIDEEVHRLR…KAQLLADLAD (262 aa).

The protein belongs to the AccA family. As to quaternary structure, acetyl-CoA carboxylase is a heterohexamer composed of biotin carboxyl carrier protein (AccB), biotin carboxylase (AccC) and two subunits each of ACCase subunit alpha (AccA) and ACCase subunit beta (AccD).

It localises to the cytoplasm. It catalyses the reaction N(6)-carboxybiotinyl-L-lysyl-[protein] + acetyl-CoA = N(6)-biotinyl-L-lysyl-[protein] + malonyl-CoA. It participates in lipid metabolism; malonyl-CoA biosynthesis; malonyl-CoA from acetyl-CoA: step 1/1. Component of the acetyl coenzyme A carboxylase (ACC) complex. First, biotin carboxylase catalyzes the carboxylation of biotin on its carrier protein (BCCP) and then the CO(2) group is transferred by the carboxyltransferase to acetyl-CoA to form malonyl-CoA. This Citrobacter koseri (strain ATCC BAA-895 / CDC 4225-83 / SGSC4696) protein is Acetyl-coenzyme A carboxylase carboxyl transferase subunit alpha.